A 280-amino-acid polypeptide reads, in one-letter code: Ribosomal RNA small subunit methyltransferase A (280 aa).

6 residues coordinate S-adenosyl-L-methionine: N28, L30, G55, E77, D103, and N122.

It belongs to the class I-like SAM-binding methyltransferase superfamily. rRNA adenine N(6)-methyltransferase family. RsmA subfamily.

It localises to the cytoplasm. It catalyses the reaction adenosine(1518)/adenosine(1519) in 16S rRNA + 4 S-adenosyl-L-methionine = N(6)-dimethyladenosine(1518)/N(6)-dimethyladenosine(1519) in 16S rRNA + 4 S-adenosyl-L-homocysteine + 4 H(+). Specifically dimethylates two adjacent adenosines (A1518 and A1519) in the loop of a conserved hairpin near the 3'-end of 16S rRNA in the 30S particle. May play a critical role in biogenesis of 30S subunits. The polypeptide is Ribosomal RNA small subunit methyltransferase A (Dinoroseobacter shibae (strain DSM 16493 / NCIMB 14021 / DFL 12)).